Here is a 302-residue protein sequence, read N- to C-terminus: Glutaminase (302 aa).

Residues Ser61, Asn111, Glu155, Asn162, Tyr186, Tyr238, and Val256 each contribute to the substrate site.

This sequence belongs to the glutaminase family. In terms of assembly, homotetramer.

It carries out the reaction L-glutamine + H2O = L-glutamate + NH4(+). This Pseudomonas aeruginosa (strain ATCC 15692 / DSM 22644 / CIP 104116 / JCM 14847 / LMG 12228 / 1C / PRS 101 / PAO1) protein is Glutaminase.